Reading from the N-terminus, the 81-residue chain is MKLGIKKVKMHVKKNDMVKVISGNDKGVSGKILRVFPEKNRVIVEGVNMRKRHMRPTQEYPQGAILEREMPIHASNVKKVS.

It belongs to the universal ribosomal protein uL24 family. As to quaternary structure, part of the 50S ribosomal subunit.

One of two assembly initiator proteins, it binds directly to the 5'-end of the 23S rRNA, where it nucleates assembly of the 50S subunit. Its function is as follows. One of the proteins that surrounds the polypeptide exit tunnel on the outside of the subunit. The sequence is that of Large ribosomal subunit protein uL24 from Chloroherpeton thalassium (strain ATCC 35110 / GB-78).